The chain runs to 335 residues: Non-structural protein P9-1 (335 aa).

The segment covering Phe27–Gln42 has biased composition (low complexity). Residues Phe27–Thr48 form a disordered region.

The sequence is that of Non-structural protein P9-1 (S9) from Fiji disease virus (isolate Sugarcane) (FDV).